We begin with the raw amino-acid sequence, 921 residues long: Leucine--tRNA ligase (921 aa).

The 'HIGH' region motif lies at 80–90 (PYPSGKLHMGH). Residues 667 to 671 (KMSKS) carry the 'KMSKS' region motif. Position 670 (lysine 670) interacts with ATP.

It belongs to the class-I aminoacyl-tRNA synthetase family.

The protein localises to the cytoplasm. It carries out the reaction tRNA(Leu) + L-leucine + ATP = L-leucyl-tRNA(Leu) + AMP + diphosphate. The chain is Leucine--tRNA ligase from Psychrobacter arcticus (strain DSM 17307 / VKM B-2377 / 273-4).